Reading from the N-terminus, the 306-residue chain is MNIKIGTINFMGIRNVAFAVTLILTVIALGSWFTKGINFGLDFTGGTLIELTYEQPADLGKVRGQLVGAGYEDAVVQSFGDARDVLVRMPSEDPELGKKVATALQQADAGNPANLKRVEYVGPQVGEELRDQGGLGMLLALGGILLYVGFRFQWKFALGAILSLVHDAIIVMGVLSFFQVTFDLTVLAAVLAVVGYSLNDTIVIFDRVRENFRVLRKADLVENLNISTSQTLLRTIATSVSTLLAIAALLFFGGDNLFGFSIALFVGVMAGTYSSIYIANVVLIWLNLTSEDLIPPQAKDTVDDRP.

The next 6 membrane-spanning stretches (helical) occupy residues Ala17 to Ile37, Gly134 to Trp154, Leu158 to Phe178, Thr185 to Phe205, Leu232 to Gly254, and Val268 to Leu288.

The protein belongs to the SecD/SecF family. SecF subfamily. As to quaternary structure, forms a complex with SecD. Part of the essential Sec protein translocation apparatus which comprises SecA, SecYEG and auxiliary proteins SecDF-YajC and YidC.

It localises to the cell inner membrane. Functionally, part of the Sec protein translocase complex. Interacts with the SecYEG preprotein conducting channel. SecDF uses the proton motive force (PMF) to complete protein translocation after the ATP-dependent function of SecA. The chain is Protein translocase subunit SecF from Pseudomonas aeruginosa (strain ATCC 15692 / DSM 22644 / CIP 104116 / JCM 14847 / LMG 12228 / 1C / PRS 101 / PAO1).